A 115-amino-acid chain; its full sequence is Large ribosomal subunit protein bL20c (115 aa).

This sequence belongs to the bacterial ribosomal protein bL20 family.

Its subcellular location is the plastid. The protein resides in the organellar chromatophore. In terms of biological role, binds directly to 23S ribosomal RNA and is necessary for the in vitro assembly process of the 50S ribosomal subunit. It is not involved in the protein synthesizing functions of that subunit. The protein is Large ribosomal subunit protein bL20c of Paulinella chromatophora.